Consider the following 338-residue polypeptide: Tripartite motif-containing protein 44 (338 aa).

Disordered regions lie at residues 1–25 (MASG…EPDE) and 72–162 (ARGD…EFDP). Positions 95–162 (EAGEGIESEE…ETEAESEFDP (68 aa)) are enriched in acidic residues. A coiled-coil region spans residues 109–153 (EEESETEEESEDESEEDSEEEMEDEQESEAEEDNQEEGESEAEGE). The B box-type zinc finger occupies 171-212 (VAKRKCPDHGLDLSTYCQEDKQLICVLCPVIGAHHGHHLSTL). The Zn(2+) site is built by C176, H179, C198, and H204. The stretch at 257–322 (QQEFKKVQKV…QLDTSNESAE (66 aa)) forms a coiled coil. A disordered region spans residues 307–338 (MAQAKEQLDTSNESAEPKAEGDEEEPGGTDED). Acidic residues predominate over residues 327 to 338 (GDEEEPGGTDED).

In terms of assembly, interacts (via coiled coil) with TRIM17 (via coiled coil).

In terms of biological role, may play a role in the process of differentiation and maturation of neuronal cells. May regulate the activity of TRIM17. Is a negative regulator of PAX6 expression. This chain is Tripartite motif-containing protein 44 (TRIM44), found in Bos taurus (Bovine).